A 494-amino-acid chain; its full sequence is Endoglucanase 22 (494 aa).

Positions 1-21 (MKPLVCSFIVILLILLPTTIS) are cleaved as a signal peptide. Asp-76 acts as the Nucleophile in catalysis. The active site involves His-413. The N-linked (GlcNAc...) asparagine glycan is linked to Asn-468. Glu-473 is a catalytic residue.

This sequence belongs to the glycosyl hydrolase 9 (cellulase E) family.

Its subcellular location is the secreted. The enzyme catalyses Endohydrolysis of (1-&gt;4)-beta-D-glucosidic linkages in cellulose, lichenin and cereal beta-D-glucans.. This is Endoglucanase 22 (GH9B16) from Arabidopsis thaliana (Mouse-ear cress).